A 272-amino-acid polypeptide reads, in one-letter code: MDSMMNQKTVLAVTDDVVLPVSSVLAIMKELGKEVIESFDPLIITQASTINQFPLDASSVEAVLAISKTSDFPSDKICGEFSRILKPGGTVSVCKVLEGETGEIQQTIQRRVTLAGFLEPQCLDLKSIKLSTFSLSFGIKAKKPSWKIGSSFALKKPVTNLFKIDLDDDVDLIDEDSLLTEEDLMKPQLPVASGCETTKKACKNCVCGRAEIEEKAVKLGLTEDQIENPQSSCGSCGLGDAFRCGTCPYKGLPPFKLGEKVTLSQNFLEADI.

Residues 1–156 (MDSMMNQKTV…KIGSSFALKK (156 aa)) are N-terminal SAM-like domain. Residues 157-185 (PVTNLFKIDLDDDVDLIDEDSLLTEEDLM) are linker. C195, C202, C205, and C207 together coordinate [2Fe-2S] cluster. Residues 195-207 (CETTKKACKNCVC) are fe-S binding site A. Residues C233, C236, C244, and C247 each contribute to the [4Fe-4S] cluster site. Short sequence motifs (cx2C motif) lie at residues 233-236 (CGSC) and 244-247 (CGTC). Residues 233-247 (CGSCGLGDAFRCGTC) form a fe-S binding site B region.

This sequence belongs to the anamorsin family. Monomer. Interacts with ATR3. Requires [2Fe-2S] cluster as cofactor. It depends on [4Fe-4S] cluster as a cofactor.

The protein localises to the cytoplasm. Its subcellular location is the mitochondrion intermembrane space. Component of the cytosolic iron-sulfur (Fe-S) protein assembly (CIA) machinery. Required for the maturation of extramitochondrial Fe-S proteins. Part of an electron transfer chain functioning in an early step of cytosolic Fe-S biogenesis, facilitating the de novo assembly of a [4Fe-4S] cluster on the cytosolic Fe-S scaffold complex. Electrons are transferred from NADPH via FAD- and FMN-containing diflavin oxidoreductase TAH18/ATR3. Together with the diflavin oxidoreductase, also required for the assembly of the diferric tyrosyl radical cofactor of ribonucleotide reductase (RNR), probably by providing electrons for reduction during radical cofactor maturation in the catalytic small subunit. Required for embryo development. The sequence is that of Anamorsin homolog from Arabidopsis thaliana (Mouse-ear cress).